The chain runs to 42 residues: uncharacterized protein (42 aa).

A helical membrane pass occupies residues 18 to 38 (VGAISLTVMMILFFIAIVWFL).

It is found in the host membrane. This is an uncharacterized protein from His1 virus (isolate Australia/Victoria) (His1V).